The primary structure comprises 380 residues: Pregnancy-associated glycoprotein 4 (380 aa).

Residues 1-15 (MKWLVLLGLVAFSEC) form the signal peptide. A propeptide spans 16–53 (IFKIPLRRVKTMRKTLSGKNMLNDVLKEHPYRLPQISF) (activation peptide). The region spanning 71-377 (YVGNITIGTP…DRGNDRIGLA (307 aa)) is the Peptidase A1 domain. N74 is a glycosylation site (N-linked (GlcNAc...) asparagine). The active site involves D89. C102 and C107 are joined by a disulfide. An N-linked (GlcNAc...) asparagine glycan is attached at N125. C261 and C265 are oxidised to a cystine. D270 is an active-site residue. Cysteines 303 and 337 form a disulfide.

Belongs to the peptidase A1 family. Trophoblast and placental tissue. Produced specifically in the invasive binucleate cells of the placenta.

Its subcellular location is the secreted. The protein resides in the extracellular space. This chain is Pregnancy-associated glycoprotein 4, found in Ovis aries (Sheep).